The chain runs to 460 residues: Cysteine--tRNA ligase (460 aa).

Zn(2+) is bound at residue Cys28. The 'HIGH' region signature appears at 30-40 (MTVYDYCHLGH). Positions 209, 234, and 238 each coordinate Zn(2+). The 'KMSKS' region signature appears at 266-270 (KMSKS). Lys269 is an ATP binding site.

Belongs to the class-I aminoacyl-tRNA synthetase family. In terms of assembly, monomer. It depends on Zn(2+) as a cofactor.

Its subcellular location is the cytoplasm. The enzyme catalyses tRNA(Cys) + L-cysteine + ATP = L-cysteinyl-tRNA(Cys) + AMP + diphosphate. The polypeptide is Cysteine--tRNA ligase (Pseudomonas putida (strain W619)).